The following is a 204-amino-acid chain: 3-isopropylmalate dehydratase small subunit (204 aa).

It belongs to the LeuD family. LeuD type 1 subfamily. As to quaternary structure, heterodimer of LeuC and LeuD.

The enzyme catalyses (2R,3S)-3-isopropylmalate = (2S)-2-isopropylmalate. The protein operates within amino-acid biosynthesis; L-leucine biosynthesis; L-leucine from 3-methyl-2-oxobutanoate: step 2/4. Its function is as follows. Catalyzes the isomerization between 2-isopropylmalate and 3-isopropylmalate, via the formation of 2-isopropylmaleate. This chain is 3-isopropylmalate dehydratase small subunit, found in Chloroflexus aggregans (strain MD-66 / DSM 9485).